The chain runs to 338 residues: Putative ankyrin repeat protein CBU_0781 (338 aa).

The tract at residues 1–31 (MSRRETPTSTISSTPTGTRTPRRRLSRKGHP) is disordered. Residues 7–19 (PTSTISSTPTGTR) are compositionally biased toward low complexity. The span at 20–31 (TPRRRLSRKGHP) shows a compositional bias: basic residues. 2 ANK repeats span residues 92-124 (QGDTLLIKAAKKGKFLIAKALLEAGAYKEIVNK) and 125-157 (LGETALICAVRHFRVETLDLLIQYHADVKIKYK). Residues 197–242 (SQIMASDKEIDEIIRNARNLQIIKKEKREAEERARTKKSKQITLQR) are a coiled coil. Residues 319–338 (KKEDTTLSRNNSLSCLSSPR) are disordered. Low complexity predominate over residues 325–338 (LSRNNSLSCLSSPR).

This chain is Putative ankyrin repeat protein CBU_0781, found in Coxiella burnetii (strain RSA 493 / Nine Mile phase I).